A 200-amino-acid polypeptide reads, in one-letter code: 3-isopropylmalate dehydratase small subunit (200 aa).

Belongs to the LeuD family. LeuD type 1 subfamily. In terms of assembly, heterodimer of LeuC and LeuD.

It catalyses the reaction (2R,3S)-3-isopropylmalate = (2S)-2-isopropylmalate. The protein operates within amino-acid biosynthesis; L-leucine biosynthesis; L-leucine from 3-methyl-2-oxobutanoate: step 2/4. In terms of biological role, catalyzes the isomerization between 2-isopropylmalate and 3-isopropylmalate, via the formation of 2-isopropylmaleate. The chain is 3-isopropylmalate dehydratase small subunit from Vibrio campbellii (strain ATCC BAA-1116).